The primary structure comprises 329 residues: GTP 3',8-cyclase (329 aa).

Residues 8-234 (AFARKFYYLR…QLRQRSDGPA (227 aa)) enclose the Radical SAM core domain. Residue arginine 17 participates in GTP binding. Cysteine 24 and cysteine 28 together coordinate [4Fe-4S] cluster. Residue tyrosine 30 participates in S-adenosyl-L-methionine binding. Cysteine 31 lines the [4Fe-4S] cluster pocket. A GTP-binding site is contributed by arginine 68. Glycine 72 contacts S-adenosyl-L-methionine. Residue threonine 99 coordinates GTP. Serine 123 contacts S-adenosyl-L-methionine. Lysine 160 serves as a coordination point for GTP. Residue methionine 194 coordinates S-adenosyl-L-methionine. [4Fe-4S] cluster contacts are provided by cysteine 257 and cysteine 260. 262-264 (RLR) contributes to the GTP binding site. Cysteine 274 contacts [4Fe-4S] cluster.

It belongs to the radical SAM superfamily. MoaA family. As to quaternary structure, monomer and homodimer. The cofactor is [4Fe-4S] cluster.

It catalyses the reaction GTP + AH2 + S-adenosyl-L-methionine = (8S)-3',8-cyclo-7,8-dihydroguanosine 5'-triphosphate + 5'-deoxyadenosine + L-methionine + A + H(+). It functions in the pathway cofactor biosynthesis; molybdopterin biosynthesis. In terms of biological role, catalyzes the cyclization of GTP to (8S)-3',8-cyclo-7,8-dihydroguanosine 5'-triphosphate. The sequence is that of GTP 3',8-cyclase from Shigella boydii serotype 18 (strain CDC 3083-94 / BS512).